The following is a 281-amino-acid chain: Phosphate import ATP-binding protein PstB (281 aa).

Residues 33–276 (FKIENLSLWY…PQLKRTRDYI (244 aa)) form the ABC transporter domain. An ATP-binding site is contributed by 67-74 (GPSGCGKS).

The protein belongs to the ABC transporter superfamily. Phosphate importer (TC 3.A.1.7) family. The complex is composed of two ATP-binding proteins (PstB), two transmembrane proteins (PstC and PstA) and a solute-binding protein (PstS).

It is found in the cell membrane. The catalysed reaction is phosphate(out) + ATP + H2O = ADP + 2 phosphate(in) + H(+). Its function is as follows. Part of the ABC transporter complex PstSACB involved in phosphate import. Responsible for energy coupling to the transport system. This Mycoplasma mobile (strain ATCC 43663 / 163K / NCTC 11711) (Mesomycoplasma mobile) protein is Phosphate import ATP-binding protein PstB.